The chain runs to 200 residues: Snake venom metalloproteinase BmooMP-I (200 aa).

The region spanning 5 to 200 (RYIELAVVAD…HNPQCILNEP (196 aa)) is the Peptidase M12B domain. Residues Glu8 and Asp92 each contribute to the Ca(2+) site. Disulfide bonds link Cys116–Cys195, Cys155–Cys179, and Cys157–Cys162. His141 serves as a coordination point for Zn(2+). Glu142 is a catalytic residue. 2 residues coordinate Zn(2+): His145 and His151. Ca(2+)-binding residues include Cys195 and Asn198.

The protein belongs to the venom metalloproteinase (M12B) family. P-I subfamily. As to quaternary structure, monomer. Zn(2+) serves as cofactor. Expressed by the venom gland.

It is found in the secreted. Its function is as follows. Zinc metalloprotease that displays fibrinogenolytic, gelatinase and weak hemorrhagic activities. Degrades the three chain of fibrinogen Aalpha-chain (FGA), Bbeta-chain (FGB), and gamma (FGG). The chain is Snake venom metalloproteinase BmooMP-I from Bothrops moojeni (Lance-headed viper).